The primary structure comprises 360 residues: Ferredoxin--NADP reductase, leaf isozyme, chloroplastic (360 aa).

A chloroplast-targeting transit peptide spans 1 to 52 (MAAAVTAAVSLPYSNSTSLPIRTSIVAPERLVFKKVSLNNVSISGRVGTIRA). Residues 81-203 (KEPYVGRCLL…TGPVGKEMLM (123 aa)) enclose the FAD-binding FR-type domain. FAD-binding positions include 139 to 142 (RLYS), 160 to 162 (CVK), Tyr166, 177 to 179 (VCS), and Thr218. Residues Ser142 and Lys162 each contribute to the NADP(+) site. NADP(+) contacts are provided by residues Thr218, 250 to 251 (VP), 280 to 281 (SR), Lys290, 319 to 320 (GL), and Glu358.

This sequence belongs to the ferredoxin--NADP reductase type 1 family. As to quaternary structure, monomer. Interacts with TIC62 (via C-terminus). FAD serves as cofactor.

It localises to the plastid. Its subcellular location is the chloroplast stroma. The protein resides in the chloroplast thylakoid membrane. It carries out the reaction 2 reduced [2Fe-2S]-[ferredoxin] + NADP(+) + H(+) = 2 oxidized [2Fe-2S]-[ferredoxin] + NADPH. The protein operates within energy metabolism; photosynthesis. May play a key role in regulating the relative amounts of cyclic and non-cyclic electron flow to meet the demands of the plant for ATP and reducing power. In Pisum sativum (Garden pea), this protein is Ferredoxin--NADP reductase, leaf isozyme, chloroplastic (PETH).